The primary structure comprises 107 residues: Protein Rev (107 aa).

Position 5 is a phosphoserine; by host CK2 (Ser5). Residues 18–26 form a homomultimerization region; that stretch reads AIKILYQSN. Disordered regions lie at residues 24–48 and 82–107; these read QSNP…WRAR and HLDC…VGRS. The short motif at 34–50 is the Nuclear localization signal and RNA-binding (RRE) element; sequence TRQARRNRRRRWRARQR. Residues 36-48 show a composition bias toward basic residues; the sequence is QARRNRRRRWRAR. A Nuclear export signal and binding to XPO1 motif is present at residues 73–84; sequence LQLPPLERLHLD. A compositionally biased stretch (polar residues) spans 88-101; that stretch reads DSGTSGTQQPQGTE. Ser92 is modified (phosphoserine; by host).

Belongs to the HIV-1 REV protein family. As to quaternary structure, homomultimer; when bound to the RRE. Multimeric assembly is essential for activity and may involve XPO1. Binds to human KPNB1, XPO1, TNPO1, RANBP5 and IPO7. Interacts with the viral Integrase. Interacts with human KHDRBS1. Interacts with human NAP1; this interaction decreases Rev multimerization and stimulates its activity. Interacts with human DEAD-box helicases DDX3 and DDX24; these interactions may serve for viral RNA export to the cytoplasm and packaging, respectively. Interacts with human PSIP1; this interaction may inhibit HIV-1 DNA integration by promoting dissociation of the Integrase-LEDGF/p75 complex. Post-translationally, asymmetrically arginine dimethylated at one site by host PRMT6. Methylation impairs the RNA-binding activity and export of viral RNA from the nucleus to the cytoplasm. In terms of processing, phosphorylated by protein kinase CK2. Presence of, and maybe binding to the N-terminus of the regulatory beta subunit of CK2 is necessary for CK2-mediated Rev's phosphorylation.

It localises to the host nucleus. Its subcellular location is the host nucleolus. The protein resides in the host cytoplasm. In terms of biological role, escorts unspliced or incompletely spliced viral pre-mRNAs (late transcripts) out of the nucleus of infected cells. These pre-mRNAs carry a recognition sequence called Rev responsive element (RRE) located in the env gene, that is not present in fully spliced viral mRNAs (early transcripts). This function is essential since most viral proteins are translated from unspliced or partially spliced pre-mRNAs which cannot exit the nucleus by the pathway used by fully processed cellular mRNAs. Rev itself is translated from a fully spliced mRNA that readily exits the nucleus. Rev's nuclear localization signal (NLS) binds directly to KPNB1/Importin beta-1 without previous binding to KPNA1/Importin alpha-1. KPNB1 binds to the GDP bound form of RAN (Ran-GDP) and targets Rev to the nucleus. In the nucleus, the conversion from Ran-GDP to Ran-GTP dissociates Rev from KPNB1 and allows Rev's binding to the RRE in viral pre-mRNAs. Rev multimerization on the RRE via cooperative assembly exposes its nuclear export signal (NES) to the surface. Rev can then form a complex with XPO1/CRM1 and Ran-GTP, leading to nuclear export of the complex. Conversion from Ran-GTP to Ran-GDP mediates dissociation of the Rev/RRE/XPO1/RAN complex, so that Rev can return to the nucleus for a subsequent round of export. Beside KPNB1, also seems to interact with TNPO1/Transportin-1, RANBP5/IPO5 and IPO7/RANBP7 for nuclear import. The nucleoporin-like HRB/RIP is an essential cofactor that probably indirectly interacts with Rev to release HIV RNAs from the perinuclear region to the cytoplasm. This is Protein Rev from Human immunodeficiency virus type 1 group M subtype G (isolate SE6165) (HIV-1).